Reading from the N-terminus, the 643-residue chain is 1-deoxy-D-xylulose-5-phosphate synthase (643 aa).

Residues histidine 72 and 113 to 115 (GHA) each bind thiamine diphosphate. Aspartate 144 contributes to the Mg(2+) binding site. Thiamine diphosphate-binding positions include 145-146 (GA), asparagine 174, tyrosine 287, and glutamate 370. Asparagine 174 contacts Mg(2+).

It belongs to the transketolase family. DXPS subfamily. As to quaternary structure, homodimer. Mg(2+) is required as a cofactor. Thiamine diphosphate serves as cofactor.

It carries out the reaction D-glyceraldehyde 3-phosphate + pyruvate + H(+) = 1-deoxy-D-xylulose 5-phosphate + CO2. The protein operates within metabolic intermediate biosynthesis; 1-deoxy-D-xylulose 5-phosphate biosynthesis; 1-deoxy-D-xylulose 5-phosphate from D-glyceraldehyde 3-phosphate and pyruvate: step 1/1. Its function is as follows. Catalyzes the acyloin condensation reaction between C atoms 2 and 3 of pyruvate and glyceraldehyde 3-phosphate to yield 1-deoxy-D-xylulose-5-phosphate (DXP). The polypeptide is 1-deoxy-D-xylulose-5-phosphate synthase (Parasynechococcus marenigrum (strain WH8102)).